We begin with the raw amino-acid sequence, 994 residues long: Chromatin modification-related protein vid21 (994 aa).

Disordered regions lie at residues 122–275 and 288–308; these read PDNL…APPV and PKVDEVEEVHSPEAKVTENDV. Basic and acidic residues-rich tracts occupy residues 158–171, 178–191, 204–233, 254–265, and 288–305; these read TIHKNIDVEEKETI, KEVETTAHAEEEKG, LTEELANKSSQEEGVDKQLRVVEATEKEHE, VESKEVKKKEVS, and PKVDEVEEVHSPEAKVTE. Residues S298 and S378 each carry the phosphoserine modification. An HSA domain is found at 475–548; sequence PKRQNEMPRL…SKNKKPYMQE (74 aa). The disordered stretch occupies residues 671–693; it reads SFMEKKARSDENQLDGNKIKDDN. Basic and acidic residues predominate over residues 672-693; the sequence is FMEKKARSDENQLDGNKIKDDN. The 61-residue stretch at 713 to 773 folds into the Myb-like domain; that stretch reads KDIRPEAPWL…DCFERWIQVD (61 aa). 2 disordered regions span residues 857–880 and 975–994; these read TMTKRAIAPSAASTEKLPPVPSPL and EQIHQLQQRKQTVPTTERTQ. A coiled-coil region spans residues 880–912; that stretch reads LELSRLKSEREAQIQQIQAQRNFAQLQSQNRAL.

The protein belongs to the EAF1 family. As to quaternary structure, component of the NuA4 histone acetyltransferase complex.

It is found in the nucleus. In terms of biological role, component of the NuA4 histone acetyltransferase complex which is involved in transcriptional activation of selected genes principally by acetylation of nucleosomal histone H4 and H2A. The NuA4 complex is also involved in DNA repair. The chain is Chromatin modification-related protein vid21 (vid21) from Schizosaccharomyces pombe (strain 972 / ATCC 24843) (Fission yeast).